A 903-amino-acid polypeptide reads, in one-letter code: Protein translocase subunit SecA (903 aa).

ATP contacts are provided by residues Gln-87, 105 to 109 (GEGKT), and Asp-494. A disordered region spans residues 861–883 (SGSQGAAPRQPVRAEGKKVGRND). A compositionally biased stretch (basic and acidic residues) spans 872–881 (VRAEGKKVGR). Positions 885, 887, 896, and 897 each coordinate Zn(2+).

It belongs to the SecA family. As to quaternary structure, monomer and homodimer. Part of the essential Sec protein translocation apparatus which comprises SecA, SecYEG and auxiliary proteins SecDF. Other proteins may also be involved. Zn(2+) serves as cofactor.

The protein localises to the cell membrane. It localises to the cytoplasm. It carries out the reaction ATP + H2O + cellular proteinSide 1 = ADP + phosphate + cellular proteinSide 2.. Part of the Sec protein translocase complex. Interacts with the SecYEG preprotein conducting channel. Has a central role in coupling the hydrolysis of ATP to the transfer of proteins into and across the cell membrane, serving as an ATP-driven molecular motor driving the stepwise translocation of polypeptide chains across the membrane. The chain is Protein translocase subunit SecA from Symbiobacterium thermophilum (strain DSM 24528 / JCM 14929 / IAM 14863 / T).